The following is a 91-amino-acid chain: Acylphosphatase (91 aa).

The 86-residue stretch at 6-91 (CMRCYISGRV…WEDYISFDVL (86 aa)) folds into the Acylphosphatase-like domain. Active-site residues include R21 and N39.

The protein belongs to the acylphosphatase family.

The enzyme catalyses an acyl phosphate + H2O = a carboxylate + phosphate + H(+). This Legionella pneumophila subsp. pneumophila (strain Philadelphia 1 / ATCC 33152 / DSM 7513) protein is Acylphosphatase (acyP).